A 1423-amino-acid chain; its full sequence is Serum albumin SDS-1 (1423 aa).

A signal peptide spans 1-23 (MGKAMLKLCITLMVLVFSGTAES). A propeptide spanning residues 24-29 (KGVMRR) is cleaved from the precursor. 7 Albumin domains span residues 29-230 (REDE…EDFK), 231-426 (HKLT…EFKS), 427-608 (EVEK…SDFK), 609-811 (MDVE…SQAR), 812-1031 (QEAL…HTIH), 1032-1226 (MEIR…AIEK), and 1227-1422 (VIKD…AIKS). A Cu cation-binding site is contributed by His36. 16 disulfides stabilise this stretch: Cys42-Cys88, Cys87-Cys96, Cys109-Cys125, Cys124-Cys135, Cys167-Cys212, Cys211-Cys221, Cys244-Cys290, Cys289-Cys298, Cys311-Cys327, Cys326-Cys337, Cys363-Cys408, Cys407-Cys416, Cys439-Cys485, Cys484-Cys493, Cys506-Cys522, and Cys521-Cys532. A glycan (N-linked (GlcNAc...) asparagine) is linked at Asn490. N-linked (GlcNAc...) asparagine glycosylation occurs at Asn541. 11 disulfides stabilise this stretch: Cys556-Cys601, Cys622-Cys668, Cys667-Cys676, Cys689-Cys705, Cys704-Cys715, Cys747-Cys792, Cys791-Cys802, Cys825-Cys871, Cys870-Cys879, Cys892-Cys907, and Cys906-Cys947. N-linked (GlcNAc...) asparagine glycosylation occurs at Asn652. Asn754 is a glycosylation site (N-linked (GlcNAc...) asparagine). N-linked (GlcNAc...) asparagine glycosylation is found at Asn908 and Asn911. The interval 910 to 936 (SNTSTTTSTTTSTTTSTTTSTTTSTTS) is disordered. Tandem repeats lie at residues 913 to 916 (STTT), 917 to 920 (STTT), 921 to 924 (STTT), 925 to 928 (STTT), 929 to 932 (STTT), 933 to 935 (STT), and 936 to 939 (STTT). Residues 913 to 939 (STTTSTTTSTTTSTTTSTTTSTTSTTT) form a 7 X 4 AA tandem repeats of S-T-T-T region. A glycan (N-linked (GlcNAc...) asparagine) is linked at Asn954. 8 disulfides stabilise this stretch: Cys969–Cys1014, Cys1013–Cys1022, Cys1045–Cys1091, Cys1090–Cys1099, Cys1112–Cys1128, Cys1127–Cys1138, Cys1163–Cys1208, and Cys1207–Cys1216. The N-linked (GlcNAc...) asparagine glycan is linked to Asn1070. Asn1236 carries N-linked (GlcNAc...) asparagine glycosylation. Disulfide bonds link Cys1239/Cys1285, Cys1284/Cys1291, Cys1304/Cys1320, Cys1319/Cys1330, Cys1359/Cys1404, and Cys1403/Cys1412.

It belongs to the ALB/AFP/VDB family. As to expression, plasma.

Its subcellular location is the secreted. In terms of biological role, serum albumin, the main protein of plasma, has a good binding capacity for water, Ca(2+), Na(+), K(+), fatty acids, hormones, bilirubin and drugs. Its main function is the regulation of the colloidal osmotic pressure of blood. This is Serum albumin SDS-1 (SDS-1) from Petromyzon marinus (Sea lamprey).